Reading from the N-terminus, the 310-residue chain is Epoxyqueuosine reductase (310 aa).

Asp-133 acts as the Proton donor in catalysis. In terms of domain architecture, 4Fe-4S ferredoxin-type spans 179–208 (YDNPSDKDYCGTCTRCVDACPTDAILQDNL). [4Fe-4S] cluster contacts are provided by Cys-188, Cys-191, Cys-194, Cys-198, Cys-214, Cys-241, Cys-244, and Cys-248.

Belongs to the QueG family. As to quaternary structure, monomer. The cofactor is cob(II)alamin. It depends on [4Fe-4S] cluster as a cofactor.

It localises to the cytoplasm. It carries out the reaction epoxyqueuosine(34) in tRNA + AH2 = queuosine(34) in tRNA + A + H2O. The protein operates within tRNA modification; tRNA-queuosine biosynthesis. Functionally, catalyzes the conversion of epoxyqueuosine (oQ) to queuosine (Q), which is a hypermodified base found in the wobble positions of tRNA(Asp), tRNA(Asn), tRNA(His) and tRNA(Tyr). This is Epoxyqueuosine reductase from Cyclobacterium marinum (strain ATCC 25205 / DSM 745 / LMG 13164 / NCIMB 1802) (Flectobacillus marinus).